Reading from the N-terminus, the 37-residue chain is Cytochrome b6-f complex subunit 5 (37 aa).

Residues 5–25 form a helical membrane-spanning segment; it reads LLSGIVLGLIPITLAGLFVTA.

Belongs to the PetG family. As to quaternary structure, the 4 large subunits of the cytochrome b6-f complex are cytochrome b6, subunit IV (17 kDa polypeptide, PetD), cytochrome f and the Rieske protein, while the 4 small subunits are PetG, PetL, PetM and PetN. The complex functions as a dimer.

The protein resides in the plastid. The protein localises to the chloroplast thylakoid membrane. Component of the cytochrome b6-f complex, which mediates electron transfer between photosystem II (PSII) and photosystem I (PSI), cyclic electron flow around PSI, and state transitions. PetG is required for either the stability or assembly of the cytochrome b6-f complex. The chain is Cytochrome b6-f complex subunit 5 from Cryptomeria japonica (Japanese cedar).